The sequence spans 329 residues: Cytosolic arginine sensor for mTORC1 subunit 1 (329 aa).

Residue serine 14 is modified to Phosphoserine. 2 consecutive ACT domains span residues 72 to 138 and 260 to 321; these read AEAT…HTLA and GELW…EVLQ. L-arginine-binding positions include 111–112, glycine 274, 280–281, and 300–304; these read SV, IV, and TFNFD.

This sequence belongs to the GATS family. Forms homodimers and heterodimers with CASTOR2. Interacts with the GATOR2 complex which is composed of MIOS, SEC13, SEH1L, WDR24 and WDR59; the interaction is negatively regulated by arginine. Interacts with TM4SF5; the interaction is positively regulated by leucine and is negatively regulated by arginine. In terms of processing, phosphorylation at Ser-14 by AKT1, promoting the interaction between CASTOR1 and RNF167. Ubiquitinated by RNF167 via 'Lys-29'-polyubiquitination, leading to its degradation, releasing the GATOR2 complex. Ubiquitination by RNF167 is promoted by phosphorylation at Ser-14 by AKT1.

The protein resides in the cytoplasm. It is found in the cytosol. In terms of biological role, functions as an intracellular arginine sensor within the amino acid-sensing branch of the TORC1 signaling pathway. As a homodimer or a heterodimer with CASTOR2, binds and inhibits the GATOR subcomplex GATOR2 and thereby mTORC1. Binding of arginine to CASTOR1 allosterically disrupts the interaction of CASTOR1-containing dimers with GATOR2 which can in turn activate mTORC1 and the TORC1 signaling pathway. This chain is Cytosolic arginine sensor for mTORC1 subunit 1, found in Bos taurus (Bovine).